Reading from the N-terminus, the 75-residue chain is Cytoplasmic envelopment protein 3 (75 aa).

Gly2 carries N-myristoyl glycine; by host lipidation. Acidic residues predominate over residues 53–65 (EGLEYDEDSENDE). The tract at residues 53–75 (EGLEYDEDSENDELLFLPNKKPN) is disordered.

The protein belongs to the herpesviridae cytoplasmic envelopment protein 3 family. In terms of assembly, interacts with BGLF2; this interaction is essential for the proper localization of each protein to the assembly complex and thus for the production of infectious virus. Post-translationally, myristoylation and palmitoylation (probably on one or more of the nearby cysteines at the N-terminus) enable membrane-binding and Golgi apparatus-specific targeting and are essential for efficient packaging. In terms of processing, phosphorylated. Phosphorylation does not seem to be required for recycling to the host Golgi apparatus. Packaging is selective for underphosphorylated forms.

The protein localises to the virion tegument. The protein resides in the virion membrane. It is found in the host cell membrane. Its subcellular location is the host Golgi apparatus membrane. Plays an important role in the cytoplasmic envelopment of tegument proteins and capsids during the assembly and egress processes. Also participates in viral entry at the fusion step probably by regulating the core fusion machinery. The sequence is that of Cytoplasmic envelopment protein 3 from Homo sapiens (Human).